Here is a 417-residue protein sequence, read N- to C-terminus: Calreticulin (417 aa).

Residues 1–17 form the signal peptide; that stretch reads MLLSVPLLLGLLGLAVA. Positions 18-197 are N-domain; the sequence is EPAVYFKEQF…NSQVESGSLE (180 aa). Gln26 serves as a coordination point for Ca(2+). Position 48 is an N6-acetyllysine (Lys48). Residues Lys62 and Lys64 each coordinate Ca(2+). Position 64 is an N6-(2-hydroxyisobutyryl)lysine (Lys64). A disulfide bond links Cys105 and Cys137. An alpha-D-glucoside is bound by residues Tyr109, Lys111, Tyr128, and Asp135. At Lys159 the chain carries N6-acetyllysine. The 1-1 repeat unit spans residues 191-202; that stretch reads VESGSLEDDWDF. Residues 191 to 255 form a 4 X approximate repeats region; it reads VESGSLEDDW…DAKKPEDWDE (65 aa). A disordered region spans residues 193–278; it reads SGSLEDDWDF…PEYKGEWKPR (86 aa). The tract at residues 198 to 308 is P-domain; sequence DDWDFLPPKK…YSPDPSIYAY (111 aa). Basic and acidic residues predominate over residues 207 to 251; the sequence is KIKDPDASKPEDWDERAKIDDPTDSKPEDWDKPEHIPDPDAKKPE. At Lys209 the chain carries N6-acetyllysine. A run of 6 repeats spans residues 210-221, 227-238, 244-255, 259-269, 273-283, and 287-297. Residues 237 to 270 form an interaction with PPIB region; it reads DKPEHIPDPDAKKPEDWDEEMDGEWEPPVIQNPE. Residues 252-261 show a composition bias toward acidic residues; sequence DWDEEMDGEW. The tract at residues 259 to 297 is 3 X approximate repeats; the sequence is GEWEPPVIQNPEYKGEWKPRQIDNPDYKGTWIHPEIDNP. The interval 309–417 is C-domain; the sequence is DNFGVLGLDL…DVPGQAKDEL (109 aa). Asp317 contributes to the an alpha-D-glucoside binding site. Asp328 provides a ligand contact to Ca(2+). N-linked (GlcNAc...) asparagine glycosylation occurs at Asn344. Residues 350 to 417 are disordered; the sequence is TKAAEKQMKD…DVPGQAKDEL (68 aa). The span at 352–379 shows a compositional bias: basic and acidic residues; that stretch reads AAEKQMKDKQDEEQRLKEEEEDKKRKEE. A compositionally biased stretch (acidic residues) spans 380–409; the sequence is EEAEDKEDDEDKDEDEEDEEDKEEDEEEDV. A Prevents secretion from ER motif is present at residues 414–417; that stretch reads KDEL.

It belongs to the calreticulin family. Monomer. Component of an EIF2 complex at least composed of CELF1/CUGBP1, CALR, CALR3, EIF2S1, EIF2S2, HSP90B1 and HSPA5. Interacts with PDIA3/ERp57 and SPACA9. Interacts with TRIM21. Interacts with NR3C1. Interacts with PPIB. Interacts (via P-domain) with PDIA5. Interacts with GABARAP. Interacts with HLA-E-B2M and HLA-G-B2M complexes. Interacts with HLA-F. Interacts with CLCC1.

The protein resides in the endoplasmic reticulum lumen. Its subcellular location is the cytoplasm. It localises to the cytosol. It is found in the secreted. The protein localises to the extracellular space. The protein resides in the extracellular matrix. Its subcellular location is the cell surface. It localises to the sarcoplasmic reticulum lumen. It is found in the cytoplasmic vesicle. The protein localises to the secretory vesicle. The protein resides in the cortical granule. Its subcellular location is the cytolytic granule. Calcium-binding chaperone that promotes folding, oligomeric assembly and quality control in the endoplasmic reticulum (ER) via the calreticulin/calnexin cycle. This lectin interacts transiently with almost all of the monoglucosylated glycoproteins that are synthesized in the ER. Interacts with the DNA-binding domain of NR3C1 and mediates its nuclear export. Involved in maternal gene expression regulation. May participate in oocyte maturation via the regulation of calcium homeostasis. Present in the cortical granules of non-activated oocytes, is exocytosed during the cortical reaction in response to oocyte activation and might participate in the block to polyspermy. The sequence is that of Calreticulin from Homo sapiens (Human).